Reading from the N-terminus, the 296-residue chain is MANQLKTVLLLGVLTGLFLAIGHLVAGKQGMIIAFVVALFMNFFSYFFSDKVALAMYGAREIMYEEAPWLHEMVEDLAKRAGIPKPKIYLAPIAVPNAFATGRDPNHAAVAVTSGILQILDKDELRGVLAHELGHVKNRDILISSIAATIGGAISMLANMAYYTAFLGGNDRENNNPIASIIGSIILFIVAPLAATLIQMAISRSREFVADEAGAKISGCPLCLANALRRLEEIAHNPQIQEIASQEINPGTAHMMIVNPLSGDFIMKLFSTHPPTEERIRRLEELARKMQPGYGF.

Helical transmembrane passes span 7–27 (TVLL…LVAG) and 29–49 (QGMI…YFFS). H131 contacts Zn(2+). E132 is a catalytic residue. H135 is a Zn(2+) binding site. 2 helical membrane passes run 141-161 (ILIS…ANMA) and 178-198 (IASI…ATLI). E207 serves as a coordination point for Zn(2+).

It belongs to the peptidase M48B family. The cofactor is Zn(2+).

The protein localises to the cell inner membrane. The protein is Protease HtpX homolog of Sulfurihydrogenibium sp. (strain YO3AOP1).